Here is a 1199-residue protein sequence, read N- to C-terminus: Ecdysone-induced protein 75B, isoforms C/D (1199 aa).

The interval 130 to 182 is disordered; sequence TTDGPTAVLQQQQPQQQMPQHFESLPHHHPQQEHQPQQQQQQHHLQHHPHPHV. 2 stretches are compositionally biased toward low complexity: residues 139-149 and 162-172; these read QQQQPQQQMPQ and EHQPQQQQQQH. Positions 242 to 318 form a DNA-binding region, nuclear receptor; sequence TVLCRVCGDK…VGMSRDAVRF (77 aa). 2 consecutive NR C4-type zinc fingers follow at residues 245–265 and 282–306; these read CRVCGDKASGFHYGVHSCEGC and CTKNQQCSILRINRNRCQYCRLKKC. The NR LBD domain maps to 352–600; that stretch reads DQPRLLAAVL…QQMWSMEDGN (249 aa). Disordered regions lie at residues 624–665, 771–808, 831–851, 895–961, 991–1104, and 1155–1188; these read KSPL…SALA, LDSPTDSGIESGNEKNECKAVSSGGSSSCSSPRSSVDD, VSVSPVRSPQPSTSSHLKRQI, AEAD…SSHS, ENST…SNSA, and VTVTASNGGPPSAAASPAPSSSPPASVGSPNPGL. 5 stretches are compositionally biased toward low complexity: residues 641 to 653, 792 to 804, 831 to 845, 897 to 942, and 950 to 961; these read GSPSSSQPQGVSL, SSGGSSSCSSPRS, VSVSPVRSPQPSTSS, ADAS…AQSQ, and SSPKASMASSHS. Polar residues-rich tracts occupy residues 993–1006 and 1018–1040; these read STAASSTTNGVGNR and AVQNQQRWGSSSVITTTCQQRQQ. Low complexity-rich tracts occupy residues 1041-1077, 1086-1104, and 1159-1187; these read SVSPHSNGSSSSSSSSSSSSSSSSSTSSNCSSSSASS, STSNGTSAPASSSSGSNSA, and ASNGGPPSAAASPAPSSSPPASVGSPNPG.

It belongs to the nuclear hormone receptor family. NR1 subfamily.

Its subcellular location is the nucleus. In terms of biological role, implicated in the regulation of ecdysone-triggered gene hierarchies. Probably plays a key role in mediating the regulation of the larval molt by 20-OH-ecdysone. In Drosophila melanogaster (Fruit fly), this protein is Ecdysone-induced protein 75B, isoforms C/D (Eip75B).